The chain runs to 519 residues: Glucose-1-phosphate adenylyltransferase large subunit 2, chloroplastic/amyloplastic (519 aa).

The protein belongs to the bacterial/plant glucose-1-phosphate adenylyltransferase family. Heterotetramer. As to expression, leaves and tubers.

It localises to the plastid. It is found in the chloroplast. The protein resides in the amyloplast. The catalysed reaction is alpha-D-glucose 1-phosphate + ATP + H(+) = ADP-alpha-D-glucose + diphosphate. It functions in the pathway glycan biosynthesis; starch biosynthesis. Activated by 3'phosphoglycerate, inhibited by orthophosphate. Allosteric regulation. Its function is as follows. This protein plays a role in synthesis of starch. It catalyzes the synthesis of the activated glycosyl donor, ADP-glucose from Glc-1-P and ATP. The protein is Glucose-1-phosphate adenylyltransferase large subunit 2, chloroplastic/amyloplastic (AGPS2) of Solanum tuberosum (Potato).